Here is an 832-residue protein sequence, read N- to C-terminus: MAGLGSPLGRLTAVTSEIYDFAAIQARWLPVWTELDPFRASDDPSDPRERRYMLDMFPYPSGDLHMGHAEAFAIGDVVARYWFQRGYNVLHPIGWDAFGLPAENAAIQRNLHPADWTYRNIETQAASFRNYAISFDWSRRLHTCDPEYYKWTQWLFLRLFERGLAYRKASPVNWCPNDQTVLANEQVVGGTCERCGAQVTKKTLTQWYFRITEYAQRLLDDMALLEGRWPERVLTMQRNWIGRSEGAYVDFTIEGRAEPVTVFTTRPDTLYGATFFVIAADSPLAAEICAPEQRAAFEAYVDQVRRLSDIDRLSTERQKTGVFLGRYAVNPVNGERIPVWAADYVLADYGTGAIMAVPAHDQRDLDFALTYGLPVRVVVDTGEGDPAVTGVATEGDGVHINSGLIDGTDKAEGIARITRYLEDIGKGRAGVTYRLRDWLVSRQRFWGAPIPIVHCPGCGEVAVPDQDLPVLLPDLRGADLAPKGISPLAGAADWVQTTCPRCGGSAQRDTDTMDTFVDSSWYYLRYCSPHDPSQPFDVAKVRQWLPVHQYVGGVEHAILHLLYSRFITKVLHDMGLVDFVEPFSALLNQGQVINQGKAMSKSLGNGVDLGEQLATYGVDAVRLTMVFAGPPEEDIDWADMNPGALGKFLARVWRIAGEVTSPVGAPPKDGDPALRRVTHRTIREVTELVESFRFNVAVARVMELANALRKAIDTGPGPADPAVREGAEALAVMLSLFAPYTAEECWARLGHQPTVAKAGWPTPDPELLAQEEVTCVVQVNGKVRERLRVSPSISEEELRAAALAAPAVEKAIDGRPVQRIIVRAPKLVNVVV.

Positions 58–68 match the 'HIGH' region motif; it reads PYPSGDLHMGH. The short motif at 598–602 is the 'KMSKS' region element; sequence AMSKS. Residue lysine 601 participates in ATP binding.

This sequence belongs to the class-I aminoacyl-tRNA synthetase family.

The protein resides in the cytoplasm. It carries out the reaction tRNA(Leu) + L-leucine + ATP = L-leucyl-tRNA(Leu) + AMP + diphosphate. In Acidothermus cellulolyticus (strain ATCC 43068 / DSM 8971 / 11B), this protein is Leucine--tRNA ligase.